A 99-amino-acid polypeptide reads, in one-letter code: UPF0045 protein MTH_1187 (99 aa).

The protein belongs to the UPF0045 family. As to quaternary structure, homotetramer.

The polypeptide is UPF0045 protein MTH_1187 (Methanothermobacter thermautotrophicus (strain ATCC 29096 / DSM 1053 / JCM 10044 / NBRC 100330 / Delta H) (Methanobacterium thermoautotrophicum)).